Reading from the N-terminus, the 448-residue chain is Phosphoglucosamine mutase (448 aa).

The active-site Phosphoserine intermediate is serine 100. Residues serine 100, aspartate 240, aspartate 242, and aspartate 244 each coordinate Mg(2+). Residue serine 100 is modified to Phosphoserine.

The protein belongs to the phosphohexose mutase family. Mg(2+) is required as a cofactor. Activated by phosphorylation.

The catalysed reaction is alpha-D-glucosamine 1-phosphate = D-glucosamine 6-phosphate. Catalyzes the conversion of glucosamine-6-phosphate to glucosamine-1-phosphate. The chain is Phosphoglucosamine mutase from Clostridium beijerinckii (strain ATCC 51743 / NCIMB 8052) (Clostridium acetobutylicum).